The chain runs to 878 residues: MSESNLSSFISTNYFNLRSAANSSNSISKPSTKKSIRNQKSPTNISSWALKKKTLQIAETTWENNEKDSTHSHYLMTGSMASRTATSLSRYSTNASLLGPSIDCVLCCIYEVPRDISTRIGLCIINCNTGQMYLSDFMDSQIYIRVVHKLQIYQPTEILIPSSSLAPTVSKLATMIKFNVAETVKIEEGSRKCFNSQDGLAAITKYLMDDTKKDLKIEEIIDKTFALCAASAAISYMEEIISKSSRNLNAFRKLRIQFEGTENTMLIDSKTVRGLELVENKLDKNGISLWKFLDTTSTKMGQRSLRNSILQPLTDRGSIEMRLEALEELKANDDLLQKLRLEMKSLPDLDKLFSRLLCINHSAIKPDQRINYVLLLKETLQSVKSLKDALNDQLIQSRLISETKKIFNNDAIMEIEKLINSCINEDCVWASSAIQLLNQRSYAVKSDSNGLLDVSRQIYKEVKEEFFREVEDLTAKNKINLDHNYDSARGFYLRIKRQEFTDDVATLPDVFISRTIKKNYIECTTLNIIKKNARLKEVMEEILLLSEETVDELLDKIATHISELFMIAEAVAILDLVCSFTYNLKENNYTIPIFTNNLLIRDSRHPLLEKVLKNFVPNTISSTKHSSSLQIITGCNMSGKSVYLKQVALICIMAQMGSGIPALYGSFPVFKRLHARVCNDSMELTSSNFGFEMKEMAYFLDDINTETLLILDELGRGSSIADGFCVSLAVTEHLLRTEATVFLSTHFQDIPKIMSKKPAVSHLHMDAVLLNDNSVKMNYQLTQKSVAIENSGIRVVKKIFNPDIIAEAYNIHSLLKIAKARTENEDSNGVVDQKTINQMKRIHNLVAILKECAGNEKEPLTLGKLKEINSDFIENFEE.

The disordered stretch occupies residues 22 to 41 (NSSNSISKPSTKKSIRNQKS). An ATP-binding site is contributed by 634–641 (GCNMSGKS).

The protein belongs to the DNA mismatch repair MutS family. As to quaternary structure, heterooligomer of MSH4 and MSH5.

In terms of biological role, involved in meiotic recombination. Facilitate crossovers between homologs during meiosis. The sequence is that of MutS protein homolog 4 (MSH4) from Saccharomyces cerevisiae (strain ATCC 204508 / S288c) (Baker's yeast).